A 391-amino-acid polypeptide reads, in one-letter code: AN1-type zinc finger and UBX domain-containing protein DDB_G0268260 (391 aa).

The segment covering 1-16 (MQQQSPPTAPQQQQQQ) has biased composition (low complexity). The segment at 1–20 (MQQQSPPTAPQQQQQQQRER) is disordered. AN1-type zinc fingers lie at residues 26-74 (DHIG…QREN) and 118-166 (APKS…IINS). Zn(2+) is bound by residues cysteine 32, cysteine 37, cysteine 47, cysteine 50, cysteine 55, histidine 58, histidine 64, cysteine 66, cysteine 124, cysteine 129, cysteine 139, cysteine 142, cysteine 147, histidine 150, histidine 156, and cysteine 158. Positions 185–236 (NINNNINNNKNNNNNNNNNNNNNNNNNNNNNNNNNNNNNNNNNNNNNSNNNN) are enriched in low complexity. Residues 185 to 240 (NINNNINNNKNNNNNNNNNNNNNNNNNNNNNNNNNNNNNNNNNNNNNSNNNNKLIY) form a disordered region. Residues 278 to 356 (SSEEIGEIGI…GLLPVSTLYM (79 aa)) enclose the UBX domain.

In Dictyostelium discoideum (Social amoeba), this protein is AN1-type zinc finger and UBX domain-containing protein DDB_G0268260.